The chain runs to 592 residues: Thiol:disulfide interchange protein DsbD (592 aa).

Positions 1–19 (MKLIASFSIFMLMSIWSFA) are cleaved as a signal peptide. 2 disulfide bridges follow: Cys-130-Cys-136 and Cys-204-Cys-326. Helical transmembrane passes span 186–206 (IWVLLIFLALGVGLAFTPCVF), 229–249 (FVLSFVYVQGMALTYSLLGLV), 265–285 (IILGALIVVFALLALVMFGAW), 318–338 (ISGLVASPCTTAPLTGILLYI), 345–365 (LLGFSALYALSLGMGIPLILF), 379–399 (WMNIIKVTFGFMMLAVALMFV), 406–426 (MATDILWSLLGLVTFSYFYVM), and 440–460 (ALVIFIGLFASAMYGYQTIFG). The Thioredoxin domain maps to 443-592 (IFIGLFASAM…AFAAHAKNIL (150 aa)). The cysteines at positions 508 and 511 are disulfide-linked.

This sequence belongs to the thioredoxin family. DsbD subfamily.

Its subcellular location is the cell inner membrane. The enzyme catalyses [protein]-dithiol + NAD(+) = [protein]-disulfide + NADH + H(+). The catalysed reaction is [protein]-dithiol + NADP(+) = [protein]-disulfide + NADPH + H(+). Functionally, required to facilitate the formation of correct disulfide bonds in some periplasmic proteins and for the assembly of the periplasmic c-type cytochromes. Acts by transferring electrons from cytoplasmic thioredoxin to the periplasm. This transfer involves a cascade of disulfide bond formation and reduction steps. The sequence is that of Thiol:disulfide interchange protein DsbD from Pseudoalteromonas atlantica (strain T6c / ATCC BAA-1087).